A 1143-amino-acid chain; its full sequence is MSSDDNNIASSASSGHGAWIYITEKTPDVLDILNRLVLTSADSDVTIAPLLYDVTVEPGFELTVKCPLMLTDNNVILKLSNFMPCVFIINSTSSEDFRFCEDVVGNVSEICEGAASRYGYTADFTEFNERTETTDSDVCSNVNVPESDYFVYIACTYGYKELLFKGYLIPHWQDLRDISIGNRRGYKIPLLSPFLFTQCKDDTVQLTDQFILDNGFYNPDLTKTLYSYIFRPLAVSLRYLDVTHLISVTLNQYITDTHATAKLCDKKVYTCHGNNKLSTGDRDVLALCDILANEVTVSYLTPFLDSAYDAPSTLDFYSWPIVKDKTHAEILENLDQFLLHMSVHIGTLIFSGNSVLYQNKISKVGGQSDGSNGQSVEGLLKSIYHTTGIQLLYEDGYDDTRSLVRQHTAKPKNLKFNMDHLSFGASFSSHVLTKIVWFLNRSEEYKTTQSVSSTCYLVINSSTGTCTACDGKHCNTCIGALMCRMATRFPNINRQQKKEPCVTTLLTRMFADMTILGSFGKKYNTERDTQQKDGRVSAEPLDKAKYVLNILDYCKRECLIDSDGNDTLKISSKQEFIKIITGLNRTIDDELIKLLSDMRKHSNAKDDLNNSTMSFTLDLNPHAYAFSPLLQFVYMKTLVNILESLAIVVIAEKISSYPMTQSAYSRWVKQHFQSVYSEFKKSIYKKGFLTLSDYKMKNTTTNDTFTDFSHLKRDYKIDNTVRSSIATVNYQCRLWNFHVSSLRDFRIKYKPIPKNKDSPYFQKADKGIQNPVCGPLSFLITRFHKDIFPNVNVSPMTLWQRIYSNTLKNFNVDLGDKHDVETFIKFMFEQTVEYEGSNSIDVRPETILQYIEFRFVNRLLHASGHRGQYIGIVQALCTTLSDTKVDGLPCYLDSSRTFGTVSEYHAYCREYNGTVKVGRTRPYCNTNGMFERRPLVTVPYALEKYTGAAGNASIFQCGQLGYFSGTGIDRNLGMINRTSDYNFMRRKHIFCTPLTDVLFTKISRGAHVFDFDMLKQRIKQLLDEHCGGFDIELAILSEILKHVKEPNYNDLLFITGYQEHIASSLFDKIKVLDELEISSYSIESLQEIFPEKEELNDTEATGSGYDFSFIIPKATDVDEITGLNIQEFTNIEDETPLVKRMRL.

The segment at 1140–1143 (RMRL) is required for nuclear localization.

The protein belongs to the herpesviridae major DNA-binding protein family. Homooligomers. Forms double-helical filaments necessary for the formation of replication compartments within the host nucleus. Interacts with the origin-binding protein. Interacts with the helicase primase complex; this interaction stimulates primer synthesis activity of the helicase-primase complex. Interacts with the DNA polymerase. Interacts with the alkaline exonuclease; this interaction increases its nuclease processivity.

Its subcellular location is the host nucleus. In terms of biological role, plays several crucial roles in viral infection. Participates in the opening of the viral DNA origin to initiate replication by interacting with the origin-binding protein. May disrupt loops, hairpins and other secondary structures present on ssDNA to reduce and eliminate pausing of viral DNA polymerase at specific sites during elongation. Promotes viral DNA recombination by performing strand-transfer, characterized by the ability to transfer a DNA strand from a linear duplex to a complementary single-stranded DNA circle. Can also catalyze the renaturation of complementary single strands. Additionally, reorganizes the host cell nucleus, leading to the formation of prereplicative sites and replication compartments. This process is driven by the protein which can form double-helical filaments in the absence of DNA. This is Major DNA-binding protein from Elephantid herpesvirus 1 (isolate Asian elephant/Berlin/Kiba/1998) (EIHV-1).